We begin with the raw amino-acid sequence, 3841 residues long: MSFVPTPSPTVVDQTTLMKKYLQFVAALTDNNTPDETKLKMMQEVSENFENVTSSPQYSTFLEHIIPRFLTFLQDGEVQFLQEKPTQQLRKLVLEIIHRIPTNEHLRSHAKNILSVMFRFLEIESEENVLICLRIIIELHKQFRPPISQEIHHFLDFVKQIYKELPKVVARYFENPQVIAENTVPSPEMVGMITSVMVKTAPERDDSETRTHTIIPRGSLSLKVLAELPIIVVLMYQLYKLNIHNVVSEFVPLIMNTIMLQVSPQARQHKLFNKELYADFIAAQIKTLSFLAYIIRIYQDLVGKYSQQMVKGMLQLLSNCPPETAHLRKELLIAAKHILTTDLRSQFIPCMDKLFDESILIGSGYTARETLRPLAYSTLADLVHHVRQNLPLTDLSLAVQLFAKNIDDESLPSSIQTMSCKLLLNLVDCIRSKSEQENGNGRDILMRMLEVFVLKFHTIARYQLVSIFKKCKPQSEMGVVDTGALPGVPATPTVTTPALPPPAPPTPVTPAPPPATSFDRAGEKEDKQTFQVSDCRSLVKTLVCGVKTITWGITSCKAPGEAQFIPNKQLQPKETQIYIKLVKYAMQALDIYQVQIAGNGQTYIRVANCQTVRMKEEKEVLEHFAGVFTMMNPLTFKEIFQTTVPYMVERISKNYALQIVANSFLANLTTSALFATILVEYLLERLPEMGSNVELSNLYLKLFKLVFGSVSLFAAENEQMLKPHLHKIVNSSMELAQSAKEPYNYFLLLRALFRSIGGGSHDLLYQEFLPLLPNLLQGLNMLQSGLHKQHMKDLFVELCLTVPVRLSSLLPYLPMLMDPLVSALNGSQTLVSQGLRTLELCVDNLQPDFLYDHIQPVRAELMQALWRTLRNPAETISHVAYRVLGKFGGSNRKMLKESQKLLYVVTEVQGPSIKAEFTDCKASIQLPMEKAIETALDCLKSANTEPYYRRQAWEVIKCFLVAMTSLEDNKHSLYQLLAHPNFTEKWIPNVIISHRYKAQDTPARRTFEQALTGAFMSAVIKDLRPSALPFVASLIRHYTMVAVAQQCGPFLLPCYQSGSQPSTGMFHSEENGSKGMDPLVLIDAIAICMAYEEKELCKIGEVALAVIFDVASIILGSKERACQLPLFSYIVERLCACCYEQAWYAKLGGVVSIKFLMERLPLIWVLQNQLTFLKALLFVMMDLTGEVSNGAVAMAKTTLEQLLIRCATPLKDEEKTEELLSAQDKSFHLVTHDLVREVTSPNSTVRKQAMHSLQVLAQVTGKSVTIIMEPHKEVLQDMVPPKKHLLRHQPANAQIGLMEGNTFCTTLQPRLFTMDLNVMEHKVFYTELLNLCEAEDAALMKLPCYKSLPSLVPLRIAALNALAACNYLPQSREKIIAALFKALNSTNSELQEAGEACMGKFLEGATIEVDQIHTHMRPLLMMLGDYRSLTLNVVNRLTSVTRLFPNSFNDKFCDQMMQHLRKWMEVVVITHKGGQRGDGSPAMEGVEEMRICSAIINLFHLIPAAPQTLVKPLLEVVMKTERAMLIEAGSPFREPLIKFLTRHPSQTVELFMMEATLNDPQWSRMFMSFLKHKDAKPLRDVLASNPNRFVPLLVPAGSAATVRPGSPSTSTARLDLQFQAIKIISIIVKNDEGWLAGQHSLVSQLRRVWVSEAFQERHRKDNMAATNWKEPKLLAFCLLSYCKRNYSEIELLFQLLRAFTGRFLCNMTFLKEYMEEEIPKNYGITHKRALFFRFVEFNDPHFNDELKAKVLQHILNPAFLYSFEKGEGEQLLGPPNPEGDNPESITSVFITKVLDPEKQADLADSLRIYLLQFSTLLVEHAPHHIHDNNKSRNSKLRRLMTFAWPCLLPKTCVDPACKYSGHLLLAHIIAKFAIHKKIVLQVFHSLLKAHTMEARAIVRQAMAILTPAVPARMEDGHQMLTHWTRKIIVEEGHTVPQLVHILHLIVQHFRVYYPVRHHLVQHMISAMQRLGFTPSVTIEQRKLAVDLAEVVIKWELQRIKDQQPESEADPGSVGEGTSGASAAMKRGMSVDSAQDVKRFRTAAGAVGTVFGRSQSIPGTEALLTKPVEKQHTDTVVNFLIRIACQVNDSTNVAGSPGELLSRRCVNLMKTALRPDMWPSSELKLQWFDKLLMTVEQPNQANFSNICTGLEILCFLLSVLQPPAILSHFKPLQRGIAACMTCGNTKVLRAVHSLLSRLMSTFPTEPSTSSVASKYEELECLYAAVGKVIYEGLTNYEKASSANPTQLFGTLMILKSACSNNSSYIDRLISVFMRSLQKMVREHLSPQPNPGAAETSTVTSELVMLSLDLVKMRLSVMNMEMRKNFIQVILTSLIEKSPDPKILRAVVKIVEEWVKNSGNPMATNQVPNPREKSILLVKMMTYIEKRFPDDLELNAQFLDLVNYVYRDDNLSGSDITSKLEPAFLSGLRCTQPLIRAKFFEVFDASMKRRVYERLLYICCSQNWESMGSHFWIKQCTELLLAVCERNTTIGTSCQGSMLPSITNVINLADSHDRAAFAMATHIKQEPRERENSETKEEDVEIDIELAPGDQTSLPKTKEQAERDAGNQLHMLTNRHDKFLDSLREVKTGALLNALVQLCHISTPLAEKTWVQLFPRLWKILSDRQQHALSGEMGPFLCSGSHQAQRDCQPSALNCFVEAMSQCVPPIPIRPCVLKYLGKTHNLWLRSTLMLEQQAFEKGLNLHIKPKQSTEFYEQESITPPQQEILDSLAELYSLLQEEDMWAGLWQKRCKFPETSTAIAYEQHGFFEQAQETYEKAMEKARKEHNVSPAIFPEYQLWEDHWIRCSKELNQWEPLTEYGQSKGHNNPYLVLECAWRVSNWAAMKEALVQVELSCPKEMAWKVNMHRGYLAICHPEEQQLNFIERLVEMASSLAIREWRRLPHIVSHVHTPLLQAAQQIIELQEAAQINAGLQPANLGRNTSLHDMKTVVKTWRNRLPIVSDDLSHWSSIFMWRQHHYQAIVTAYENNTQHDPNTNNAMLGVHASASAIIQYGKIARKQGLVNVALDILSRIHTIPTVPIVDCFQKIRQQVKCYLQLAGVMGKNECMQGLEVIESTNLKYFTKEMTAEFYALKGMFLAQINKSEEANKAFSAAVQMHDVLVKAWAMWGDYLENIFVKDRQPHLGVSSITCYLHACRHQNESKSRKYLAKVLWLLSFDDKNTLADAVDKYCIGVPPIQWLAWIPQLLTCLVGSEGKPLLNLISQVGRVYPQAVYFPIRTLYLTLKIEQRERYKSDSGQQQPSSAAAQTHSASDPGPIRATAPMWRCSRIMHMQRELHPTLLSSLEGIVDQMVWFRENWHEEVLRQLQQGLAKCYSVAFEKSGAVSDAKITPHTLNFVKKLVSTFGVGLENVSNVSTMFSSAASESLARRAQATAQDPVFQKMKGQFTTDFDFSVPGSMKLHNLISKLKKWIKILEAKTKQLPKFFLIEEKCRFLSNFSAQTAEVEIPGEFLMPKPTHYYIKIARFMPRVEIVQKHNTAARRLYIRGHNGKIYPYLVMNDACLTESRREERVLQLLRLLNPCLEKRKETTKRHLFFTVPRVVAVSPQMRLVEDNPSSLSLVEIYKQRCAKKGIEHDNPISRYYDRLATVQARGTQASHQVLRDILKEVQGNMVPRSMLKEWALHTFPNATDYWTFRKMFTIQLALIGLAEFMLHLNRLNPEMLQIAQDTGKLNVSYFRFDINDATGDLDANRPVPFRLTPNISEFLTTIGVSGPLTASMIAVARCFAQPNFKVDGILKAVLRDEIIAWHKKTQEDTSMPLSPAGQPENMDSQQLVSLVQKAVTAIMTRLHNLAQFEGGESKVNTLVAAANSLDNLCRMDPAWHPWL.

Disordered regions lie at residues Thr491–Thr516 and Gln2002–Gly2027. Positions Ala498–Ala515 are enriched in pro residues. Residues Lys2025–Arg2040 carry the Bipartite nuclear localization signal motif. Positions Val2671 to Thr3239 constitute an FAT domain. Residues Lys3249–Gly3271 form a disordered region. A compositionally biased stretch (low complexity) spans Asp3251 to Ser3268. In terms of domain architecture, PI3K/PI4K catalytic spans Met3482–His3805. The segment at Val3488–Ala3494 is G-loop. Positions His3669–Met3677 are catalytic loop. Positions Val3689 to Thr3714 are activation loop. One can recognise an FATC domain in the interval Gln3809–Leu3841.

The protein belongs to the PI3/PI4-kinase family. TRA1 subfamily.

Its subcellular location is the nucleus. In terms of biological role, adapter protein, which is found in various multiprotein chromatin complexes with histone acetyltransferase activity (HAT), which gives a specific tag for epigenetic transcription activation. May be required for the mitotic checkpoint and normal cell cycle progression. May play a role in the formation and maintenance of the auditory system. The chain is Transformation/transcription domain-associated protein from Danio rerio (Zebrafish).